The primary structure comprises 414 residues: Na(+)-translocating NADH-quinone reductase subunit B (414 aa).

Helical transmembrane passes span 23 to 40, 56 to 76, 129 to 149, and 164 to 184; these read WFAL…PGLV, IMIM…YNAG, FLPI…LFCM, and ILFA…LGIT. Position 236 is an FMN phosphoryl threonine (Thr236). Helical transmembrane passes span 268–288, 297–317, 325–345, 358–378, and 381–401; these read IPGS…AMIV, IIAG…VVGS, MPWH…FMAT, WWYG…NPAY, and GMML…HVVI.

Belongs to the NqrB/RnfD family. As to quaternary structure, composed of six subunits; NqrA, NqrB, NqrC, NqrD, NqrE and NqrF. Requires FMN as cofactor.

The protein localises to the cell inner membrane. The enzyme catalyses a ubiquinone + n Na(+)(in) + NADH + H(+) = a ubiquinol + n Na(+)(out) + NAD(+). NQR complex catalyzes the reduction of ubiquinone-1 to ubiquinol by two successive reactions, coupled with the transport of Na(+) ions from the cytoplasm to the periplasm. NqrA to NqrE are probably involved in the second step, the conversion of ubisemiquinone to ubiquinol. This chain is Na(+)-translocating NADH-quinone reductase subunit B, found in Vibrio parahaemolyticus serotype O3:K6 (strain RIMD 2210633).